We begin with the raw amino-acid sequence, 438 residues long: Thymidine phosphorylase (438 aa).

The protein belongs to the thymidine/pyrimidine-nucleoside phosphorylase family. Homodimer.

It catalyses the reaction thymidine + phosphate = 2-deoxy-alpha-D-ribose 1-phosphate + thymine. Its pathway is pyrimidine metabolism; dTMP biosynthesis via salvage pathway; dTMP from thymine: step 1/2. Its function is as follows. The enzymes which catalyze the reversible phosphorolysis of pyrimidine nucleosides are involved in the degradation of these compounds and in their utilization as carbon and energy sources, or in the rescue of pyrimidine bases for nucleotide synthesis. This Sinorhizobium fredii (strain NBRC 101917 / NGR234) protein is Thymidine phosphorylase.